The following is a 216-amino-acid chain: MSTSYYPHPIIAREGWPFIAGAFVVALVVQFFAGWVWALPLWLVALLVLQFFRDPPRVIPTLAGAVLAPADGRIVAVDKVQDPYLSREALKISVFMNVFNVHSNRSPVDGEIRDQWYFPGSFLNASLPKASLENERNALWIRTKEGRDVTCVQIAGLIAKRIVCHVHPGEHLARGQRFGFIRFGSRVDVYLPPGMKVNVGIGDKVQATQTVLAEFR.

S185 acts as the Schiff-base intermediate with substrate; via pyruvic acid in catalysis. A Pyruvic acid (Ser); by autocatalysis modification is found at S185.

It belongs to the phosphatidylserine decarboxylase family. PSD-A subfamily. Heterodimer of a large membrane-associated beta subunit and a small pyruvoyl-containing alpha subunit. It depends on pyruvate as a cofactor. In terms of processing, is synthesized initially as an inactive proenzyme. Formation of the active enzyme involves a self-maturation process in which the active site pyruvoyl group is generated from an internal serine residue via an autocatalytic post-translational modification. Two non-identical subunits are generated from the proenzyme in this reaction, and the pyruvate is formed at the N-terminus of the alpha chain, which is derived from the carboxyl end of the proenzyme. The post-translation cleavage follows an unusual pathway, termed non-hydrolytic serinolysis, in which the side chain hydroxyl group of the serine supplies its oxygen atom to form the C-terminus of the beta chain, while the remainder of the serine residue undergoes an oxidative deamination to produce ammonia and the pyruvoyl prosthetic group on the alpha chain.

The protein localises to the cell membrane. The catalysed reaction is a 1,2-diacyl-sn-glycero-3-phospho-L-serine + H(+) = a 1,2-diacyl-sn-glycero-3-phosphoethanolamine + CO2. Its pathway is phospholipid metabolism; phosphatidylethanolamine biosynthesis; phosphatidylethanolamine from CDP-diacylglycerol: step 2/2. Functionally, catalyzes the formation of phosphatidylethanolamine (PtdEtn) from phosphatidylserine (PtdSer). The chain is Phosphatidylserine decarboxylase proenzyme from Nitrosomonas eutropha (strain DSM 101675 / C91 / Nm57).